The chain runs to 293 residues: 3-methyl-2-oxobutanoate hydroxymethyltransferase (293 aa).

Positions methionine 1–proline 25 are disordered. The Mg(2+) site is built by aspartate 67 and aspartate 110. Residues aspartate 67–serine 68, aspartate 110, and lysine 139 contribute to the 3-methyl-2-oxobutanoate site. Glutamate 141 is a Mg(2+) binding site. Residue glutamate 208 is the Proton acceptor of the active site.

It belongs to the PanB family. As to quaternary structure, homodecamer; pentamer of dimers. The cofactor is Mg(2+).

Its subcellular location is the cytoplasm. It carries out the reaction 3-methyl-2-oxobutanoate + (6R)-5,10-methylene-5,6,7,8-tetrahydrofolate + H2O = 2-dehydropantoate + (6S)-5,6,7,8-tetrahydrofolate. Its pathway is cofactor biosynthesis; (R)-pantothenate biosynthesis; (R)-pantoate from 3-methyl-2-oxobutanoate: step 1/2. Its function is as follows. Catalyzes the reversible reaction in which hydroxymethyl group from 5,10-methylenetetrahydrofolate is transferred onto alpha-ketoisovalerate to form ketopantoate. The chain is 3-methyl-2-oxobutanoate hydroxymethyltransferase from Acidovorax sp. (strain JS42).